A 126-amino-acid chain; its full sequence is MAILGLGTDIVEIARIEAVISRSGERLARRVLSDNEWAIWETHQQPVRFLAKRFAVKEAAAKAFGTGIRNGLAFNQFEVFNDELGKPRLRLWGEALKLAERLGVAHMHVTLADERHYACATVIIES.

2 residues coordinate Mg(2+): Asp-9 and Glu-58.

This sequence belongs to the P-Pant transferase superfamily. AcpS family. The cofactor is Mg(2+).

The protein localises to the cytoplasm. It carries out the reaction apo-[ACP] + CoA = holo-[ACP] + adenosine 3',5'-bisphosphate + H(+). Functionally, transfers the 4'-phosphopantetheine moiety from coenzyme A to a Ser of acyl-carrier-protein. The sequence is that of Holo-[acyl-carrier-protein] synthase from Citrobacter koseri (strain ATCC BAA-895 / CDC 4225-83 / SGSC4696).